Here is a 444-residue protein sequence, read N- to C-terminus: Aflatoxin biosynthesis regulatory protein (444 aa).

The interval 1 to 25 (MVDHISPRASPGPIRSSQTRRARKL) is disordered. Residues 29–56 (CTSCASSKVRCTKEKPACARCIERGLAC) constitute a DNA-binding region (zn(2)-C6 fungal-type). A disordered region spans residues 64-174 (MGRNPRAPSP…AGQEQSTLSS (111 aa)). Basic residues predominate over residues 106–116 (TQAHTHAHSHP). The segment covering 120-130 (PQSHPQSNQPP) has biased composition (low complexity). Over residues 136 to 149 (PNGSSSVSAIFSHQ) the composition is skewed to polar residues.

Interacts with aflS.

The protein localises to the nucleus. In terms of biological role, transcription factor; part of the gene cluster that mediates the biosynthesis of aflatoxin, a polyketide-derived furanocoumarin which is part of the most toxic and carcinogenic compounds among the known mycotoxins. Binds to at least 17 genes in the aflatoxin biosynthetic cluster, leading to the activation of an enzymatic cascade reaction that results in aflatoxin biosynthesis. Promoter regions of several biosynthesis genes are bound by aflR in a dimeric form with a 5'-TCG(N5)CGA-3' binding motif. AflR also recognizes 5'-TTAGGCCTAA-3' and 5'-TCGCAGCCCGG-3' binding sequences. AflR achieves its binding specificity through a mechanism in which either two copies of aflR or its complex with aflS bind to target sites on DNA in a highly cooperative manner. AflS acts as a modulator of aflR's DNA-binding by decreasing its DNA-binding affinity. In addition to aflatoxin biosynthesis, also plays a positive role in the fungal growth, spore germination, sclerotial development, and carbohydrate metabolism. The sequence is that of Aflatoxin biosynthesis regulatory protein from Aspergillus flavus (strain ATCC 200026 / FGSC A1120 / IAM 13836 / NRRL 3357 / JCM 12722 / SRRC 167).